We begin with the raw amino-acid sequence, 185 residues long: Ribosome-recycling factor (185 aa).

Belongs to the RRF family.

Its subcellular location is the cytoplasm. In terms of biological role, responsible for the release of ribosomes from messenger RNA at the termination of protein biosynthesis. May increase the efficiency of translation by recycling ribosomes from one round of translation to another. The sequence is that of Ribosome-recycling factor from Shewanella sp. (strain W3-18-1).